Consider the following 103-residue polypeptide: Large ribosomal subunit protein bL21 (103 aa).

Belongs to the bacterial ribosomal protein bL21 family. As to quaternary structure, part of the 50S ribosomal subunit. Contacts protein L20.

This protein binds to 23S rRNA in the presence of protein L20. This Kineococcus radiotolerans (strain ATCC BAA-149 / DSM 14245 / SRS30216) protein is Large ribosomal subunit protein bL21.